A 655-amino-acid chain; its full sequence is Very long-chain specific acyl-CoA dehydrogenase, mitochondrial (655 aa).

Residues 1-40 constitute a mitochondrion transit peptide; sequence MRAARMAQSTGRQLLRLRGVSSWPGELLGQPRPGPARRPY. The interval 22–66 is disordered; the sequence is SWPGELLGQPRPGPARRPYASGVAQAAVDQSDSQPSEASTREKRA. A catalytic region spans residues 41–482; the sequence is ASGVAQAAVD…ALQGCMDKGK (442 aa). Residues 49 to 59 are compositionally biased toward polar residues; it reads VDQSDSQPSEA. Position 71 is an N6-acetyllysine; alternate (lysine 71). Lysine 71 is modified (N6-succinyllysine; alternate). Lysine 195 carries the post-translational modification N6-succinyllysine. Position 214-223 (214-223) interacts with FAD; it reads FCLTEPSSGS. Position 237 is an S-nitrosocysteine (cysteine 237). Position 239 is an N6-acetyllysine; alternate (lysine 239). Lysine 239 carries the post-translational modification N6-succinyllysine; alternate. 249–251 provides a ligand contact to FAD; that stretch reads WIS. An N6-acetyllysine; alternate mark is found at lysine 276 and lysine 278. N6-succinyllysine; alternate is present on residues lysine 276 and lysine 278. Position 298 is an N6-acetyllysine (lysine 298). Residue lysine 331 is modified to N6-acetyllysine; alternate. N6-succinyllysine; alternate is present on lysine 331. Residue lysine 372 is modified to N6-succinyllysine. 461–463 contributes to the substrate binding site; it reads FEG. The active-site Proton acceptor is glutamate 462. 464–466 provides a ligand contact to FAD; sequence TND. Lysine 482 is modified (N6-acetyllysine; alternate). Position 482 is an N6-succinyllysine; alternate (lysine 482). The interval 483 to 516 is membrane-anchoring; the sequence is ELSGLGNALKNPFGNAGLLLGEAGKQLRRRAGLG. Phosphoserine is present on residues serine 517 and serine 522. Residue lysine 550 is modified to N6-acetyllysine. Residue lysine 556 is modified to N6-acetyllysine; alternate. Lysine 556 is subject to N6-succinyllysine; alternate. Glutamine 562 is a binding site for FAD. Lysine 639 carries the post-translational modification N6-succinyllysine.

The protein belongs to the acyl-CoA dehydrogenase family. As to quaternary structure, homodimer. Homodimerizes after import into the mitochondrion. FAD is required as a cofactor. S-nitrosylation at Cys-237 in liver improves catalytic efficiency.

It is found in the mitochondrion inner membrane. The catalysed reaction is a very-long-chain 2,3-saturated fatty acyl-CoA + oxidized [electron-transfer flavoprotein] + H(+) = a very-long-chain (2E)-enoyl-CoA + reduced [electron-transfer flavoprotein]. It carries out the reaction dodecanoyl-CoA + oxidized [electron-transfer flavoprotein] + H(+) = (2E)-dodecenoyl-CoA + reduced [electron-transfer flavoprotein]. The enzyme catalyses tetradecanoyl-CoA + oxidized [electron-transfer flavoprotein] + H(+) = (2E)-tetradecenoyl-CoA + reduced [electron-transfer flavoprotein]. It catalyses the reaction oxidized [electron-transfer flavoprotein] + hexadecanoyl-CoA + H(+) = (2E)-hexadecenoyl-CoA + reduced [electron-transfer flavoprotein]. The catalysed reaction is octadecanoyl-CoA + oxidized [electron-transfer flavoprotein] + H(+) = (2E)-octadecenoyl-CoA + reduced [electron-transfer flavoprotein]. It carries out the reaction eicosanoyl-CoA + oxidized [electron-transfer flavoprotein] + H(+) = (2E)-eicosenoyl-CoA + reduced [electron-transfer flavoprotein]. The enzyme catalyses docosanoyl-CoA + oxidized [electron-transfer flavoprotein] + H(+) = (2E)-docosenoyl-CoA + reduced [electron-transfer flavoprotein]. It catalyses the reaction tetracosanoyl-CoA + oxidized [electron-transfer flavoprotein] + H(+) = (2E)-tetracosenoyl-CoA + reduced [electron-transfer flavoprotein]. It functions in the pathway lipid metabolism; mitochondrial fatty acid beta-oxidation. Functionally, very long-chain specific acyl-CoA dehydrogenase is one of the acyl-CoA dehydrogenases that catalyze the first step of mitochondrial fatty acid beta-oxidation, an aerobic process breaking down fatty acids into acetyl-CoA and allowing the production of energy from fats. The first step of fatty acid beta-oxidation consists in the removal of one hydrogen from C-2 and C-3 of the straight-chain fatty acyl-CoA thioester, resulting in the formation of trans-2-enoyl-CoA. Among the different mitochondrial acyl-CoA dehydrogenases, very long-chain specific acyl-CoA dehydrogenase acts specifically on acyl-CoAs with saturated 12 to 24 carbons long primary chains. The protein is Very long-chain specific acyl-CoA dehydrogenase, mitochondrial of Bos taurus (Bovine).